A 275-amino-acid polypeptide reads, in one-letter code: Translation initiation factor 2 subunit alpha (275 aa).

The S1 motif domain maps to 12–83 (GEFVVATVKR…RKGHIDLSLR (72 aa)).

Belongs to the eIF-2-alpha family. In terms of assembly, heterotrimer composed of an alpha, a beta and a gamma chain.

Functionally, eIF-2 functions in the early steps of protein synthesis by forming a ternary complex with GTP and initiator tRNA. This Pyrococcus abyssi (strain GE5 / Orsay) protein is Translation initiation factor 2 subunit alpha (eif2a).